The chain runs to 505 residues: MKAAYTAYRCLTKDLEGCAMNPELTMESLGTLHGPVGGGSGGGGGGGGGGGGGGPGHEQELLASPSPHHAGRGAAGSLRGPPPPTAHQELGTAAAAAAAASRSAMVTSMASILDGSDYRPELSIPLHHAMSMSCDSSPPGMGMSNTYTTLTPLQPLPPISTVSDKFHHPHPHHHPHHHHHHHHHHQRLSGNVSGSFTLMRDERGLPSMNNLYSPYKEMPSMSQSLSPLAATPLGNGLGGLHNAQQSLPNYGPPGHDKMLSPNFDAHHTAMLTRGEQHLSRGLGTPPAAMMSHLNGLHHPGHTQSHGPVLAPSRERPPSSSSGSQVATSGQLEEINTKEVAQRITAELKRYSIPQAIFAQRVLCRSQGTLSDLLRNPKPWSKLKSGRETFRRMWKWLQEPEFQRMSALRLAACKRKEQEPNKDRNNSQKKSRLVFTDLQRRTLFAIFKENKRPSKEMQITISQQLGLELTTVSNFFMNARRRSLEKWQDDLGTGGSSSTSSTCTKA.

Disordered stretches follow at residues 29–94 (LGTL…GTAA), 165–190 (KFHH…RLSG), and 275–333 (EQHL…QLEE). Residues 35-56 (PVGGGSGGGGGGGGGGGGGGPG) show a composition bias toward gly residues. Positions 167 to 187 (HHPHPHHHPHHHHHHHHHHQR) are enriched in basic residues. A DNA-binding region (CUT) is located at residues 325 to 411 (VATSGQLEEI…QRMSALRLAA (87 aa)). The segment at residues 427-486 (QKKSRLVFTDLQRRTLFAIFKENKRPSKEMQITISQQLGLELTTVSNFFMNARRRSLEKW) is a DNA-binding region (homeobox).

This sequence belongs to the CUT homeobox family.

The protein resides in the nucleus. Its function is as follows. Transcriptional activator. Activates the transcription of a number of liver genes such as HNF3B. This Mus musculus (Mouse) protein is One cut domain family member 2 (Onecut2).